Here is a 249-residue protein sequence, read N- to C-terminus: 2,3-bisphosphoglycerate-dependent phosphoglycerate mutase (249 aa).

Residues 7 to 14 (RHGESEWN), 20 to 21 (TG), Arg-59, 86 to 89 (ERHY), Lys-97, 113 to 114 (RR), and 182 to 183 (GN) contribute to the substrate site. The active-site Tele-phosphohistidine intermediate is His-8. Glu-86 acts as the Proton donor/acceptor in catalysis.

It belongs to the phosphoglycerate mutase family. BPG-dependent PGAM subfamily.

The enzyme catalyses (2R)-2-phosphoglycerate = (2R)-3-phosphoglycerate. Its pathway is carbohydrate degradation; glycolysis; pyruvate from D-glyceraldehyde 3-phosphate: step 3/5. Functionally, catalyzes the interconversion of 2-phosphoglycerate and 3-phosphoglycerate. In Lachnoclostridium phytofermentans (strain ATCC 700394 / DSM 18823 / ISDg) (Clostridium phytofermentans), this protein is 2,3-bisphosphoglycerate-dependent phosphoglycerate mutase.